Reading from the N-terminus, the 291-residue chain is ATP phosphoribosyltransferase (291 aa).

The protein belongs to the ATP phosphoribosyltransferase family. Long subfamily. It depends on Mg(2+) as a cofactor.

It is found in the cytoplasm. It catalyses the reaction 1-(5-phospho-beta-D-ribosyl)-ATP + diphosphate = 5-phospho-alpha-D-ribose 1-diphosphate + ATP. It functions in the pathway amino-acid biosynthesis; L-histidine biosynthesis; L-histidine from 5-phospho-alpha-D-ribose 1-diphosphate: step 1/9. Its activity is regulated as follows. Feedback inhibited by histidine. Functionally, catalyzes the condensation of ATP and 5-phosphoribose 1-diphosphate to form N'-(5'-phosphoribosyl)-ATP (PR-ATP). Has a crucial role in the pathway because the rate of histidine biosynthesis seems to be controlled primarily by regulation of HisG enzymatic activity. The protein is ATP phosphoribosyltransferase of Geotalea daltonii (strain DSM 22248 / JCM 15807 / FRC-32) (Geobacter daltonii).